Consider the following 322-residue polypeptide: Acetyl-coenzyme A carboxylase carboxyl transferase subunit alpha (322 aa).

The region spanning 39–293 is the CoA carboxyltransferase C-terminal domain; the sequence is RLQKKSQALT…RRALTDTLAE (255 aa).

Belongs to the AccA family. Acetyl-CoA carboxylase is a heterohexamer composed of biotin carboxyl carrier protein (AccB), biotin carboxylase (AccC) and two subunits each of ACCase subunit alpha (AccA) and ACCase subunit beta (AccD).

It is found in the cytoplasm. The enzyme catalyses N(6)-carboxybiotinyl-L-lysyl-[protein] + acetyl-CoA = N(6)-biotinyl-L-lysyl-[protein] + malonyl-CoA. It participates in lipid metabolism; malonyl-CoA biosynthesis; malonyl-CoA from acetyl-CoA: step 1/1. Its function is as follows. Component of the acetyl coenzyme A carboxylase (ACC) complex. First, biotin carboxylase catalyzes the carboxylation of biotin on its carrier protein (BCCP) and then the CO(2) group is transferred by the carboxyltransferase to acetyl-CoA to form malonyl-CoA. The polypeptide is Acetyl-coenzyme A carboxylase carboxyl transferase subunit alpha (Thiobacillus denitrificans (strain ATCC 25259 / T1)).